We begin with the raw amino-acid sequence, 254 residues long: Homeobox protein BarH-like 1 (254 aa).

The segment at 1 to 20 (MQRPGEPGAARFGPPEGCAD) is disordered. A DNA-binding region (homeobox) is located at residues 142–201 (GRRSRTVFTELQLMGLEKRFEKQKYLSTPDRIDLAESLGLSQLQVKTWYQNRRMKWKKIV). The interval 204-254 (GGGLESPTKPKGRPKKNSIPTSEQLTEQERAKDAEKPAEVPGEPSDRSRED) is disordered. The segment covering 230-254 (EQERAKDAEKPAEVPGEPSDRSRED) has biased composition (basic and acidic residues).

The protein belongs to the BAR homeobox family. Widely expressed. Expressed at higher levels in testis and heart. Detected in craniofacial tissue and adult iris, but not in lymphocytes, fibroblasts, choroid retina, retinal pigment epithelium, kidney, or fetal liver.

The protein resides in the nucleus. Its function is as follows. Transcription factor, which is involved in craniofacial development, in odontogenesis and in stomach organogenesis. May have a role in the differentiation of molars from incisors. Plays a role in suppressing endodermal Wnt activity. Binds to a regulatory module of the NCAM promoter. This is Homeobox protein BarH-like 1 (BARX1) from Homo sapiens (Human).